We begin with the raw amino-acid sequence, 292 residues long: Outer membrane protein assembly factor BamD (292 aa).

An N-terminal signal peptide occupies residues 1-26 (MIQRPTFFTPTHLLAMLLATFVLITG). Residue Cys-27 is the site of N-palmitoyl cysteine attachment. Cys-27 is lipidated: S-diacylglycerol cysteine.

It belongs to the BamD family. As to quaternary structure, part of the Bam complex.

Its subcellular location is the cell outer membrane. In terms of biological role, part of the outer membrane protein assembly complex, which is involved in assembly and insertion of beta-barrel proteins into the outer membrane. This Xylella fastidiosa (strain 9a5c) protein is Outer membrane protein assembly factor BamD.